Consider the following 815-residue polypeptide: SNF1 protein kinase subunit beta-1 (815 aa).

Residues 1-11 (MGNSPSTQDPS) are compositionally biased toward polar residues. Disordered regions lie at residues 1–88 (MGNS…TIDK) and 117–146 (SDDH…TVKR). The N-myristoyl glycine moiety is linked to residue G2. Positions 12 to 31 (HSTKKEHGHHFHDAFNKDRQ) are enriched in basic and acidic residues. Residues 32 to 42 (GSITSQLFNNR) show a composition bias toward polar residues. The residue at position 33 (S33) is a Phosphoserine. Basic and acidic residues-rich tracts occupy residues 72 to 88 (PSTD…TIDK) and 117 to 129 (SDDH…EEQV). Residues S181, S198, S200, S206, S209, and S220 each carry the phosphoserine modification. Disordered stretches follow at residues 311–335 (HANN…NDDF) and 362–389 (KHHN…FASL). A compositionally biased stretch (low complexity) spans 313-326 (NNNGNIENNTRNKG). At S331 the chain carries Phosphoserine. Positions 363–376 (HHNKTKKAQNKKIR) are enriched in basic residues. Residues 377–389 (SVSNSRRSSFASL) show a composition bias toward low complexity. The tract at residues 473–716 (VSTDIASALK…LQQGGNIDAE (244 aa)) is kinase-interacting sequence (KIS); required for interaction with SNF1. Residues S494 and S497 each carry the phosphoserine modification. A disordered region spans residues 581–616 (EPTLDEELPKRPELKRFPSSSRKSSYYSAKGVERPS). Residues 587–596 (ELPKRPELKR) are compositionally biased toward basic and acidic residues. Positions 599-608 (SSSRKSSYYS) are enriched in low complexity. Residue S643 is modified to Phosphoserine. Residues 724–804 (SRYPVPDLPI…FITQVVYAPC (81 aa)) form an association with SNF1 kinase complex (ASC) domain; required for interaction with SNF4 region.

It belongs to the 5'-AMP-activated protein kinase beta subunit family. In terms of assembly, component of the SNF1 kinase complex, a heterotrimeric complex composed of the catalytic alpha subunit SNF1, one of the three related beta subunits SIP1, SIP2 or GAL83, and the regulatory gamma subunit SNF4. The beta subunit serves as a bridge between the catalytic and the regulatory subunit. Interacts (via KIS domain) with SNF1. Interacts (via ASC domain) with SNF4. In terms of processing, phosphorylated by SNF1 in vitro.

The protein localises to the cytoplasm. It is found in the vacuole membrane. Beta subunit of the SNF1 kinase complex, which is required for transcriptional, metabolic, and developmental adaptations in response to glucose limitation. Has a structural role, mediating heterotrimer formation, and a regulatory role, defining carbon source-regulated subcellular location and substrate specificity of the SNF1 kinase complex. Promotes the PKA-regulated relocalization of the SNF1 kinase complex to the vacuolar membrane in response to various types of carbon stress. The polypeptide is SNF1 protein kinase subunit beta-1 (SIP1) (Saccharomyces cerevisiae (strain ATCC 204508 / S288c) (Baker's yeast)).